Here is a 388-residue protein sequence, read N- to C-terminus: Nocturnin (388 aa).

Glu152 lines the Mg(2+) pocket. Residues Glu152, 176–178 (KPW), Asn220, 243–246 (HLKA), 281–283 (DFN), and His371 each bind substrate.

This sequence belongs to the CCR4/nocturin family. Mg(2+) is required as a cofactor. Expressed only in the photoreceptors of the retina. Expression is controlled by the retinal circadian clock.

It localises to the cytoplasm. Its subcellular location is the nucleus. The protein resides in the perinuclear region. The protein localises to the mitochondrion. It carries out the reaction NADP(+) + H2O = phosphate + NAD(+). The catalysed reaction is NADPH + H2O = phosphate + NADH. In terms of biological role, phosphatase which catalyzes the conversion of NADP(+) to NAD(+) and of NADPH to NADH. Shows a small preference for NADPH over NADP(+). Component of the circadian clock or downstream effector of clock function. Exhibits a high amplitude circadian rhythm with maximal levels in early evening. In constant darkness or constant light, the amplitude of the rhythm decreases. This chain is Nocturnin, found in Xenopus laevis (African clawed frog).